The sequence spans 124 residues: Small ribosomal subunit protein uS13 (124 aa).

Basic residues predominate over residues 93-117 (KNLPVRGQRTRTNARTRKGPRKTVA). The interval 93–124 (KNLPVRGQRTRTNARTRKGPRKTVANKKIESK) is disordered.

It belongs to the universal ribosomal protein uS13 family. Part of the 30S ribosomal subunit. Forms a loose heterodimer with protein S19. Forms two bridges to the 50S subunit in the 70S ribosome.

In terms of biological role, located at the top of the head of the 30S subunit, it contacts several helices of the 16S rRNA. In the 70S ribosome it contacts the 23S rRNA (bridge B1a) and protein L5 of the 50S subunit (bridge B1b), connecting the 2 subunits; these bridges are implicated in subunit movement. Contacts the tRNAs in the A and P-sites. This is Small ribosomal subunit protein uS13 from Mycoplasma genitalium (strain ATCC 33530 / DSM 19775 / NCTC 10195 / G37) (Mycoplasmoides genitalium).